The chain runs to 508 residues: Photosystem II CP47 reaction center protein (508 aa).

6 consecutive transmembrane segments (helical) span residues serine 21–serine 36, isoleucine 101–tryptophan 115, glycine 140–phenylalanine 156, isoleucine 203–serine 218, valine 237–valine 252, and threonine 457–arginine 472.

The protein belongs to the PsbB/PsbC family. PsbB subfamily. PSII is composed of 1 copy each of membrane proteins PsbA, PsbB, PsbC, PsbD, PsbE, PsbF, PsbH, PsbI, PsbJ, PsbK, PsbL, PsbM, PsbT, PsbX, PsbY, PsbZ, Psb30/Ycf12, at least 3 peripheral proteins of the oxygen-evolving complex and a large number of cofactors. It forms dimeric complexes. Requires Binds multiple chlorophylls. PSII binds additional chlorophylls, carotenoids and specific lipids. as cofactor.

It localises to the plastid. The protein resides in the chloroplast thylakoid membrane. In terms of biological role, one of the components of the core complex of photosystem II (PSII). It binds chlorophyll and helps catalyze the primary light-induced photochemical processes of PSII. PSII is a light-driven water:plastoquinone oxidoreductase, using light energy to abstract electrons from H(2)O, generating O(2) and a proton gradient subsequently used for ATP formation. The polypeptide is Photosystem II CP47 reaction center protein (Zea mays (Maize)).